A 71-amino-acid chain; its full sequence is Large ribosomal subunit protein bL31 (71 aa).

Residues cysteine 16, cysteine 18, cysteine 37, and cysteine 40 each coordinate Zn(2+).

The protein belongs to the bacterial ribosomal protein bL31 family. Type A subfamily. In terms of assembly, part of the 50S ribosomal subunit. The cofactor is Zn(2+).

Its function is as follows. Binds the 23S rRNA. This chain is Large ribosomal subunit protein bL31, found in Marinomonas sp. (strain MWYL1).